Reading from the N-terminus, the 437-residue chain is RNA-binding motif, single-stranded-interacting protein 3 (437 aa).

The interval 28–57 (YAPAPHPMAPPSPSTNSSSNNSSNNSSGEQ) is disordered. Residues 31-40 (APHPMAPPSP) are compositionally biased toward pro residues. The segment covering 41 to 54 (STNSSSNNSSNNSS) has biased composition (low complexity). RRM domains follow at residues 61-134 (TNLY…MAKQ) and 140-225 (TNLY…FADG). A compositionally biased stretch (polar residues) spans 399-422 (TSPQTVAPSSQDTSGQQQQIAVDT). The tract at residues 399–437 (TSPQTVAPSSQDTSGQQQQIAVDTSNEHAPAYSYQQSKP) is disordered.

As to expression, expressed in fetal brain, fetal lung, fetal liver, heart, brain, placenta, lung, liver, muscle, kidney and pancreas.

The protein localises to the cytoplasm. Functionally, binds poly(A) and poly(U) oligoribonucleotides. This chain is RNA-binding motif, single-stranded-interacting protein 3 (RBMS3), found in Homo sapiens (Human).